A 446-amino-acid polypeptide reads, in one-letter code: MELFAEKRILTVSQLNGLIRGVLEENFEQVWVEGEISNLAMPHSGHLYFTLKDAGAQVRCVMFRASSRALKFKPKDGMGLIVRGRVSVFEPRGEYQLIVEYLEPQGIGALQLAFIQLKERLAKEGLFAETHKKPIPKLPQRIGVVTSATGAAIHDILNVLNRRFANVQVLIRPVKVQGEGAAGEIAAAIRDFNRYREIDVMIVGRGGGSLEDLWAFNEEVVARAIYESKIPVISAVGHEIDFTIADFVADLRAPTPSAAAELVVKSKAELASDLDALSHRLVLAMRHCLEDCWGDVNGLTRALKDPSLLLGHLAQRVDDLDERIKHAVQVMLLRRKEKAAFLQNRLRLQNPALQVEQGKELLLGYCARMENTMERLLERARQAAAVSAGKLHALSPLATLARGYSIVRKLPDMSVISDSSQVEPGDLLDLTFQQGGAHCRVETKHD.

This sequence belongs to the XseA family. In terms of assembly, heterooligomer composed of large and small subunits.

It is found in the cytoplasm. It catalyses the reaction Exonucleolytic cleavage in either 5'- to 3'- or 3'- to 5'-direction to yield nucleoside 5'-phosphates.. Bidirectionally degrades single-stranded DNA into large acid-insoluble oligonucleotides, which are then degraded further into small acid-soluble oligonucleotides. In Geotalea uraniireducens (strain Rf4) (Geobacter uraniireducens), this protein is Exodeoxyribonuclease 7 large subunit.